Consider the following 130-residue polypeptide: Small ribosomal subunit protein uS9 (130 aa).

Positions 109–130 (RVKERKKYGQKGARAKFQFSKR) are disordered.

This sequence belongs to the universal ribosomal protein uS9 family.

The polypeptide is Small ribosomal subunit protein uS9 (Desulfotalea psychrophila (strain LSv54 / DSM 12343)).